The chain runs to 924 residues: Periplasmic nitrate reductase (924 aa).

Positions 1–30 (MNRRDFIKNTAIASAASVAGLSVPSSMLGA) form a signal peptide, tat-type signal. In terms of domain architecture, 4Fe-4S Mo/W bis-MGD-type spans 35 to 91 (WKWDKAVCRFCGTGCGIMIARKDGKIVATKGDPAAPVNRGLNCIKGYFNAKIMYGED). The [4Fe-4S] cluster site is built by cysteine 42, cysteine 45, cysteine 49, and cysteine 77. Mo-bis(molybdopterin guanine dinucleotide) is bound by residues lysine 79, glutamine 147, asparagine 172, cysteine 176, 209–216 (WGANMAEM), methionine 417, glutamine 421, asparagine 527, 552–553 (SD), lysine 575, aspartate 602, and 814–823 (TGRVLEHWHS). Position 890 (tryptophan 890) interacts with substrate. Mo-bis(molybdopterin guanine dinucleotide) is bound by residues asparagine 898 and lysine 915.

The protein belongs to the prokaryotic molybdopterin-containing oxidoreductase family. NasA/NapA/NarB subfamily. Component of the periplasmic nitrate reductase NapAB complex composed of NapA and NapB. [4Fe-4S] cluster serves as cofactor. Mo-bis(molybdopterin guanine dinucleotide) is required as a cofactor. In terms of processing, predicted to be exported by the Tat system. The position of the signal peptide cleavage has not been experimentally proven.

The protein resides in the periplasm. The enzyme catalyses 2 Fe(II)-[cytochrome] + nitrate + 2 H(+) = 2 Fe(III)-[cytochrome] + nitrite + H2O. Its function is as follows. Catalytic subunit of the periplasmic nitrate reductase complex NapAB. Receives electrons from NapB and catalyzes the reduction of nitrate to nitrite. The polypeptide is Periplasmic nitrate reductase (Campylobacter jejuni subsp. jejuni serotype O:2 (strain ATCC 700819 / NCTC 11168)).